The following is a 216-amino-acid chain: Somatotropin (216 aa).

Residues 1 to 26 (MAAGPRTSALLAFALLCLPWTREVGA) form the signal peptide. H45 is a binding site for Zn(2+). A disulfide bridge links C78 with C189. Residue S131 is modified to Phosphoserine. E198 is a Zn(2+) binding site. A disulfide bond links C206 and C214.

Belongs to the somatotropin/prolactin family.

It is found in the secreted. Plays an important role in growth control. Its major role in stimulating body growth is to stimulate the liver and other tissues to secrete IGF1. It stimulates both the differentiation and proliferation of myoblasts. It also stimulates amino acid uptake and protein synthesis in muscle and other tissues. This is Somatotropin (GH1) from Sus scrofa (Pig).